The chain runs to 176 residues: Inner membrane-spanning protein YciB (176 aa).

Helical transmembrane passes span 24–44, 49–69, 76–96, 119–139, and 149–169; these read TATA…AFRH, PMLW…LVLH, WKPT…QLAF, LSVV…FVAY, and FKLF…SLWL.

Belongs to the YciB family.

The protein localises to the cell inner membrane. Plays a role in cell envelope biogenesis, maintenance of cell envelope integrity and membrane homeostasis. The protein is Inner membrane-spanning protein YciB of Paraburkholderia phytofirmans (strain DSM 17436 / LMG 22146 / PsJN) (Burkholderia phytofirmans).